Reading from the N-terminus, the 257-residue chain is Probable amino-acid ABC transporter ATP-binding protein HI_1078 (257 aa).

The 241-residue stretch at 4–244 (LKVSNIQKNF…PQHERTKQFL (241 aa)) folds into the ABC transporter domain. 36–43 (GPSGSGKT) serves as a coordination point for ATP.

Belongs to the ABC transporter superfamily.

Its subcellular location is the cell inner membrane. Its function is as follows. Probably part of a binding-protein-dependent transport system for an amino acid. Probably responsible for energy coupling to the transport system. This Haemophilus influenzae (strain ATCC 51907 / DSM 11121 / KW20 / Rd) protein is Probable amino-acid ABC transporter ATP-binding protein HI_1078.